The chain runs to 653 residues: Threonine--tRNA ligase (653 aa).

In terms of domain architecture, TGS spans 1–61; it reads MIKITFPDGN…NEDAEVKLFK (61 aa). The interval 243-542 is catalytic; that stretch reads DHRKIGKELE…LIEHTAGKFP (300 aa). 3 residues coordinate Zn(2+): Cys-338, His-389, and His-519.

The protein belongs to the class-II aminoacyl-tRNA synthetase family. Homodimer. Zn(2+) serves as cofactor.

It localises to the cytoplasm. It catalyses the reaction tRNA(Thr) + L-threonine + ATP = L-threonyl-tRNA(Thr) + AMP + diphosphate + H(+). In terms of biological role, catalyzes the attachment of threonine to tRNA(Thr) in a two-step reaction: L-threonine is first activated by ATP to form Thr-AMP and then transferred to the acceptor end of tRNA(Thr). Also edits incorrectly charged L-seryl-tRNA(Thr). In Porphyromonas gingivalis (strain ATCC BAA-308 / W83), this protein is Threonine--tRNA ligase.